Reading from the N-terminus, the 858-residue chain is MPGLAILGLSLAAFLELGMGSSLCLSQQFKAQGDYILGGLFPLGTTEEATLNQRTQPNGILCTRFSPLGLFLAMAMKMAVEEINNGSALLPGLRLGYDLFDTCSEPVVTMKPSLMFMAKVGSQSIAAYCNYTQYQPRVLAVIGPHSSELALITGKFFSFFLMPQVSYSASMDRLSDRETFPSFFRTVPSDRVQLQAVVTLLQNFSWNWVAALGSDDDYGREGLSIFSGLANSRGICIAHEGLVPQHDTSGQQLGKVVDVLRQVNQSKVQVVVLFASARAVYSLFSYSILHDLSPKVWVASESWLTSDLVMTLPNIARVGTVLGFLQRGALLPEFSHYVETRLALAADPTFCASLKAELDLEERVMGPRCSQCDYIMLQNLSSGLMQNLSAGQLHHQIFATYAAVYSVAQALHNTLQCNVSHCHTSEPVQPWQLLENMYNMSFRARDLTLQFDAKGSVDMEYDLKMWVWQSPTPVLHTVGTFNGTLQLQHSKMYWPGNQVPVSQCSRQCKDGQVRRVKGFHSCCYDCVDCKAGSYRKHPDDFTCTPCGKDQWSPEKSTTCLPRRPKFLAWGEPAVLSLLLLLCLVLGLTLAALGLFVHYWDSPLVQASGGSLFCFGLICLGLFCLSVLLFPGRPRSASCLAQQPMAHLPLTGCLSTLFLQAAEIFVESELPLSWANWLCSYLRGPWAWLVVLLATLVEAALCAWYLMAFPPEVVTDWQVLPTEVLEHCRMRSWVSLGLVHITNAVLAFLCFLGTFLVQSQPGRYNRARGLTFAMLAYFIIWVSFVPLLANVQVAYQPAVQMGAILFCALGILATFHLPKCYVLLWLPELNTQEFFLGRSPKEASDGNSGSSEATRGHSE.

An N-terminal signal peptide occupies residues 1–20 (MPGLAILGLSLAAFLELGMG). At 21-575 (SSLCLSQQFK…FLAWGEPAVL (555 aa)) the chain is on the extracellular side. N-linked (GlcNAc...) asparagine glycans are attached at residues N85, N130, N203, N264, N379, N387, N418, N439, and N482. Residues 576–596 (SLLLLLCLVLGLTLAALGLFV) form a helical membrane-spanning segment. Residues 597 to 610 (HYWDSPLVQASGGS) are Cytoplasmic-facing. A helical transmembrane segment spans residues 611–631 (LFCFGLICLGLFCLSVLLFPG). At 632-644 (RPRSASCLAQQPM) the chain is on the extracellular side. A helical transmembrane segment spans residues 645–665 (AHLPLTGCLSTLFLQAAEIFV). Residues 666–687 (ESELPLSWANWLCSYLRGPWAW) lie on the Cytoplasmic side of the membrane. The helical transmembrane segment at 688–708 (LVVLLATLVEAALCAWYLMAF) threads the bilayer. The Extracellular portion of the chain corresponds to 709 to 735 (PPEVVTDWQVLPTEVLEHCRMRSWVSL). A helical membrane pass occupies residues 736–756 (GLVHITNAVLAFLCFLGTFLV). The Cytoplasmic portion of the chain corresponds to 757–767 (QSQPGRYNRAR). Residues 768–788 (GLTFAMLAYFIIWVSFVPLLA) traverse the membrane as a helical segment. Over 789–796 (NVQVAYQP) the chain is Extracellular. Residues 797–817 (AVQMGAILFCALGILATFHLP) traverse the membrane as a helical segment. Topologically, residues 818–858 (KCYVLLWLPELNTQEFFLGRSPKEASDGNSGSSEATRGHSE) are cytoplasmic. The segment at 839 to 858 (PKEASDGNSGSSEATRGHSE) is disordered.

The protein belongs to the G-protein coupled receptor 3 family. TAS1R subfamily. In terms of assembly, forms homodimers or heterodimers with TAS1R1 and TAS1R2.

It is found in the cell membrane. Functionally, putative taste receptor. TAS1R1/TAS1R3 responds to the umami taste stimulus (the taste of monosodium glutamate) and also to most of the 20 standard L-amino acids, but not to their D-enantiomers or other compounds. TAS1R2/TAS1R3 recognizes diverse natural and synthetic sweeteners. TAS1R3 is essential for the recognition and response to the disaccharide trehalose. Sequence differences within and between species can significantly influence the selectivity and specificity of taste responses. This Rattus norvegicus (Rat) protein is Taste receptor type 1 member 3 (Tas1r3).